The primary structure comprises 801 residues: Phenylalanine--tRNA ligase beta subunit (801 aa).

The tRNA-binding domain maps to 39–154 (LKMPQKVVVG…GHLELGVELG (116 aa)). Residues 398–475 (IDEITIKTTF…RIYGIDNVSS (78 aa)) enclose the B5 domain. Mg(2+) is bound by residues Asp-453, Asp-459, Glu-462, and Glu-463. Positions 708 to 800 (SKYQKSTRDL…LVREFDAVLR (93 aa)) constitute an FDX-ACB domain.

It belongs to the phenylalanyl-tRNA synthetase beta subunit family. Type 1 subfamily. Tetramer of two alpha and two beta subunits. The cofactor is Mg(2+).

It is found in the cytoplasm. The catalysed reaction is tRNA(Phe) + L-phenylalanine + ATP = L-phenylalanyl-tRNA(Phe) + AMP + diphosphate + H(+). The sequence is that of Phenylalanine--tRNA ligase beta subunit from Helicobacter hepaticus (strain ATCC 51449 / 3B1).